We begin with the raw amino-acid sequence, 434 residues long: Serine hydroxymethyltransferase (434 aa).

Residues L133 and 137–139 contribute to the (6S)-5,6,7,8-tetrahydrofolate site; that span reads GHL. K242 carries the post-translational modification N6-(pyridoxal phosphate)lysine.

This sequence belongs to the SHMT family. Homodimer. Pyridoxal 5'-phosphate is required as a cofactor.

It localises to the cytoplasm. It carries out the reaction (6R)-5,10-methylene-5,6,7,8-tetrahydrofolate + glycine + H2O = (6S)-5,6,7,8-tetrahydrofolate + L-serine. It participates in one-carbon metabolism; tetrahydrofolate interconversion. Its pathway is amino-acid biosynthesis; glycine biosynthesis; glycine from L-serine: step 1/1. Functionally, catalyzes the reversible interconversion of serine and glycine with tetrahydrofolate (THF) serving as the one-carbon carrier. This reaction serves as the major source of one-carbon groups required for the biosynthesis of purines, thymidylate, methionine, and other important biomolecules. Also exhibits THF-independent aldolase activity toward beta-hydroxyamino acids, producing glycine and aldehydes, via a retro-aldol mechanism. This chain is Serine hydroxymethyltransferase, found in Bradyrhizobium sp. (strain BTAi1 / ATCC BAA-1182).